The sequence spans 246 residues: Small ribosomal subunit protein uS3 (246 aa).

The KH type-2 domain occupies 23-94 (LNEFLTRELA…RIELYAEKVA (72 aa)). The tract at residues 201-246 (GPKKPLPDNVSVVEPKEEKIYETPETEYKIPPPSKPLDDLSEAKVL) is disordered. Composition is skewed to basic and acidic residues over residues 214–228 (EPKE…ETEY) and 236–246 (PLDDLSEAKVL). Thr-223 and Thr-226 each carry phosphothreonine. Residue Ser-241 is modified to Phosphoserine.

This sequence belongs to the universal ribosomal protein uS3 family. As to quaternary structure, interacts with LTV1; the interaction is RNA-independent.

The protein localises to the cytoplasm. The protein resides in the nucleus. Functionally, has DNA repair activity directed towards the mutagenic lesions 8-oxoguanine and abasic sites in DNA. It can cleave DNA containing 8-oxoguanine residues efficiently. Also acts as an ap lyase, cleaving phosphodiester bonds via a beta,delta elimination reaction. This chain is Small ribosomal subunit protein uS3 (RpS3), found in Drosophila melanogaster (Fruit fly).